Reading from the N-terminus, the 1175-residue chain is Structural maintenance of chromosomes protein 2-1 (1175 aa).

One can recognise a Zinc-hook domain in the interval 2–1161 (HIKEICLEGF…NVLFRTKFVD (1160 aa)). 32–39 (GLNGSGKS) serves as a coordination point for ATP. Residues 172–508 (RMYENKKEAA…AQLANFQFTY (337 aa)) adopt a coiled-coil conformation. One can recognise an SMC hinge domain in the interval 518–638 (SKVKGVVAKL…KTTDVAKEVA (121 aa)). Residues 673-1028 (LRKLHDLAEA…ELDEKKKETL (356 aa)) adopt a coiled-coil conformation.

It belongs to the SMC family. SMC2 subfamily. As to quaternary structure, forms a heterodimer with SMC4. Component of the condensin complex, which contains the SMC2 and SMC4 heterodimer, and three non SMC subunits that probably regulate the complex: CAPH, CAPD2 and CAPG. Highly expressed in roots and young floral buds.

Its subcellular location is the nucleus. In terms of biological role, central component of the condensin complex, a complex required for conversion of interphase chromatin into mitotic-like condense chromosomes. The condensin complex probably introduces positive supercoils into relaxed DNA in the presence of type I topoisomerases and converts nicked DNA into positive knotted forms in the presence of type II topoisomerases. Also involved in chromosome segregation in meiosis. In Arabidopsis thaliana (Mouse-ear cress), this protein is Structural maintenance of chromosomes protein 2-1 (SMC2-1).